The following is a 606-amino-acid chain: Peptide-N(4)-(N-acetyl-beta-glucosaminyl)asparagine amidase (606 aa).

In terms of domain architecture, Thioredoxin spans 2–108 (PVTEVGSLPE…IAEKIRQHYS (107 aa)). Residues C191, C194, C225, and C228 each contribute to the Zn(2+) site. Residue C251 is the Nucleophile of the active site. Residues H278 and D295 contribute to the active site. Positions 404–606 (DLGGRITGSE…SFSVKIWMKN (203 aa)) constitute a PAW domain.

It belongs to the transglutaminase-like superfamily. PNGase family. Zn(2+) serves as cofactor.

It is found in the cytoplasm. The protein localises to the endoplasmic reticulum. It carries out the reaction Hydrolysis of an N(4)-(acetyl-beta-D-glucosaminyl)asparagine residue in which the glucosamine residue may be further glycosylated, to yield a (substituted) N-acetyl-beta-D-glucosaminylamine and a peptide containing an aspartate residue.. Its activity is regulated as follows. Inhibited by Zn(2+) and z-VAD-fmk (caspase inhibitor) but unaffected by EDTA. Specifically deglycosylates the denatured form of N-linked glycoproteins in the cytoplasm and assists their proteasome-mediated degradation. Cleaves the beta-aspartyl-glucosamine (GlcNAc) of the glycan and the amide side chain of Asn, converting Asn to Asp. Prefers proteins containing high-mannose over those bearing complex type oligosaccharides. Can recognize misfolded proteins in the endoplasmic reticulum that are exported to the cytosol to be destroyed and deglycosylate them, while it has no activity toward native proteins. Deglycosylation is a prerequisite for subsequent proteasome-mediated degradation of some, but not all, misfolded glycoproteins. Also displays oxidoreductase (thioredoxin) activity. Involved in regulating the expression of proteasomal subunits such as rpt-3 in order to confer resistance to proteasomal dysfunction. The chain is Peptide-N(4)-(N-acetyl-beta-glucosaminyl)asparagine amidase (png-1) from Caenorhabditis elegans.